The following is a 356-amino-acid chain: Probable cysteine protease RDL6 (356 aa).

The first 26 residues, 1-26, serve as a signal peptide directing secretion; it reads MGFVRPVCMTILFLLIVFVLSAPSSA. Positions 27–132 are cleaved as a propeptide — activation peptide; it reads MDLPATSGGH…RRYVPLAGDQ (106 aa). Residues N37 and N86 are each glycosylated (N-linked (GlcNAc...) asparagine). 3 disulfide bridges follow: C154/C195, C188/C229, and C288/C339. The active site involves C157. Residues H294 and N314 contribute to the active site.

This sequence belongs to the peptidase C1 family.

Probable thiol protease. This Arabidopsis thaliana (Mouse-ear cress) protein is Probable cysteine protease RDL6.